A 456-amino-acid chain; its full sequence is Exodeoxyribonuclease 7 large subunit (456 aa).

It belongs to the XseA family. Heterooligomer composed of large and small subunits.

Its subcellular location is the cytoplasm. The catalysed reaction is Exonucleolytic cleavage in either 5'- to 3'- or 3'- to 5'-direction to yield nucleoside 5'-phosphates.. Bidirectionally degrades single-stranded DNA into large acid-insoluble oligonucleotides, which are then degraded further into small acid-soluble oligonucleotides. This Azotobacter vinelandii (strain DJ / ATCC BAA-1303) protein is Exodeoxyribonuclease 7 large subunit.